The sequence spans 185 residues: Peptidyl-tRNA hydrolase (185 aa).

Tyrosine 14 is a tRNA binding site. Histidine 19 acts as the Proton acceptor in catalysis. TRNA is bound by residues phenylalanine 64, asparagine 66, and asparagine 112.

The protein belongs to the PTH family. In terms of assembly, monomer.

It localises to the cytoplasm. It catalyses the reaction an N-acyl-L-alpha-aminoacyl-tRNA + H2O = an N-acyl-L-amino acid + a tRNA + H(+). In terms of biological role, hydrolyzes ribosome-free peptidyl-tRNAs (with 1 or more amino acids incorporated), which drop off the ribosome during protein synthesis, or as a result of ribosome stalling. Functionally, catalyzes the release of premature peptidyl moieties from peptidyl-tRNA molecules trapped in stalled 50S ribosomal subunits, and thus maintains levels of free tRNAs and 50S ribosomes. This chain is Peptidyl-tRNA hydrolase, found in Halalkalibacterium halodurans (strain ATCC BAA-125 / DSM 18197 / FERM 7344 / JCM 9153 / C-125) (Bacillus halodurans).